The chain runs to 89 residues: Small ribosomal subunit protein uS15 (89 aa).

Belongs to the universal ribosomal protein uS15 family. Part of the 30S ribosomal subunit. Forms a bridge to the 50S subunit in the 70S ribosome, contacting the 23S rRNA.

Its function is as follows. One of the primary rRNA binding proteins, it binds directly to 16S rRNA where it helps nucleate assembly of the platform of the 30S subunit by binding and bridging several RNA helices of the 16S rRNA. Functionally, forms an intersubunit bridge (bridge B4) with the 23S rRNA of the 50S subunit in the ribosome. The protein is Small ribosomal subunit protein uS15 of Pseudomonas aeruginosa (strain LESB58).